The following is a 430-amino-acid chain: DD-carboxypeptidase/endopeptidase Mpg (430 aa).

Residues His295, Asp299, and His375 each coordinate Zn(2+).

The protein belongs to the peptidase M23B family. Monomer. It depends on Zn(2+) as a cofactor. Post-translationally, likely to be synthesized as a proenzyme. The cleavage of the N-terminal domain is probably required for the activation of the enzyme.

The protein resides in the cell outer membrane. Has both endopeptidase and DD-carboxypeptidase activities. Degrades cell wall peptidoglycan (PG) to allow consummate expression of pili. The polypeptide is DD-carboxypeptidase/endopeptidase Mpg (Neisseria meningitidis serogroup B (strain ATCC BAA-335 / MC58)).